We begin with the raw amino-acid sequence, 1610 residues long: Adenylate cyclase type 10 (1610 aa).

2 consecutive Guanylate cyclase domains span residues 42–179 (VLMF…RLAQ) and 293–418 (TIVF…ARMM). 2 residues coordinate Mg(2+): aspartate 47 and isoleucine 48. Residue 47-52 (DISGFT) participates in ATP binding. Position 95 (lysine 95) interacts with hydrogencarbonate. Aspartate 99 provides a ligand contact to Mg(2+). ATP-binding residues include aspartate 99 and lysine 144. Valine 167, arginine 176, and methionine 337 together coordinate hydrogencarbonate. ATP contacts are provided by residues valine 406 and 412-416 (NIAAR).

This sequence belongs to the adenylyl cyclase class-4/guanylyl cyclase family. Requires Mg(2+) as cofactor. The cofactor is Mn(2+).

Its subcellular location is the cell membrane. It localises to the cytoplasm. The protein resides in the cytoskeleton. It is found in the perinuclear region. The protein localises to the nucleus. Its subcellular location is the cell projection. It localises to the cilium. The catalysed reaction is ATP = 3',5'-cyclic AMP + diphosphate. Activated by manganese or magnesium ions. In the presence of magnesium ions, the enzyme is activated by bicarbonate. Calcium mildly increases the enzyme activity, also in the presence of magnesium ions. Functionally, catalyzes the formation of the signaling molecule cAMP. May function as sensor that mediates responses to changes in cellular bicarbonate and CO(2) levels. Has a critical role in mammalian spermatogenesis by producing the cAMP which regulates cAMP-responsive nuclear factors indispensable for sperm maturation in the epididymis. Induces capacitation, the maturational process that sperm undergo prior to fertilization. Involved in ciliary beat regulation. This is Adenylate cyclase type 10 (ADCY10) from Oryctolagus cuniculus (Rabbit).